We begin with the raw amino-acid sequence, 505 residues long: uncharacterized protein (505 aa).

A signal peptide spans 1–22 (MAILKSALVGFICFLHFFIVNA). Residues asparagine 25 and asparagine 114 are each glycosylated (N-linked (GlcNAc...) asparagine). A run of 5 helical transmembrane segments spans residues 181–201 (LFLN…WSFI), 216–236 (ISGV…YFYF), 266–286 (FLLL…GSLL), 291–311 (ILAG…FISP), and 318–338 (VILF…LWIV). Residue asparagine 342 is glycosylated (N-linked (GlcNAc...) asparagine). The next 2 membrane-spanning stretches (helical) occupy residues 365–385 (IVIC…AILI) and 400–420 (LLWF…MLTI). Asparagine 454 carries N-linked (GlcNAc...) asparagine glycosylation.

The protein belongs to the LU7TM family.

Its subcellular location is the membrane. This is an uncharacterized protein from Schizosaccharomyces pombe (strain 972 / ATCC 24843) (Fission yeast).